The chain runs to 286 residues: Shikimate dehydrogenase (NADP(+)) (286 aa).

Shikimate contacts are provided by residues 19 to 21 (SLS) and T66. The active-site Proton acceptor is the K70. N91 and D107 together coordinate shikimate. NADP(+)-binding positions include 129-133 (GSGGA) and L229. Shikimate is bound at residue Y231. G252 contacts NADP(+).

Belongs to the shikimate dehydrogenase family. In terms of assembly, homodimer.

It catalyses the reaction shikimate + NADP(+) = 3-dehydroshikimate + NADPH + H(+). Its pathway is metabolic intermediate biosynthesis; chorismate biosynthesis; chorismate from D-erythrose 4-phosphate and phosphoenolpyruvate: step 4/7. Its function is as follows. Involved in the biosynthesis of the chorismate, which leads to the biosynthesis of aromatic amino acids. Catalyzes the reversible NADPH linked reduction of 3-dehydroshikimate (DHSA) to yield shikimate (SA). The protein is Shikimate dehydrogenase (NADP(+)) of Prochlorococcus marinus (strain MIT 9215).